Reading from the N-terminus, the 330-residue chain is Aspartate--ammonia ligase (330 aa).

This sequence belongs to the class-II aminoacyl-tRNA synthetase family. AsnA subfamily.

The protein resides in the cytoplasm. It catalyses the reaction L-aspartate + NH4(+) + ATP = L-asparagine + AMP + diphosphate + H(+). It participates in amino-acid biosynthesis; L-asparagine biosynthesis; L-asparagine from L-aspartate (ammonia route): step 1/1. The chain is Aspartate--ammonia ligase from Shigella boydii serotype 18 (strain CDC 3083-94 / BS512).